A 552-amino-acid polypeptide reads, in one-letter code: Putative transport protein YE4162 (552 aa).

6 helical membrane passes run 1 to 21 (MSAI…GLWI), 26 to 46 (VYGV…VGHF), 65 to 85 (FGLI…FFSS), 96 to 116 (FAIL…KLFA), 119 to 139 (LPII…LGAA), and 158 to 178 (MGYA…MWLI). 2 consecutive RCK C-terminal domains span residues 192–276 (EFDS…VVGE) and 279–361 (DVTL…VVGN). The next 6 helical transmembrane spans lie at 371 to 391 (MLPV…PLFI), 393 to 413 (GFPA…ALIL), 439 to 459 (IVLF…NTLV), 464 to 484 (LAWI…VGIL), 493 to 513 (YLTL…LAFA), and 530 to 550 (VYPL…VLFW).

Belongs to the AAE transporter (TC 2.A.81) family. YidE subfamily.

The protein localises to the cell membrane. The protein is Putative transport protein YE4162 of Yersinia enterocolitica serotype O:8 / biotype 1B (strain NCTC 13174 / 8081).